We begin with the raw amino-acid sequence, 617 residues long: Type IV inositol polyphosphate 5-phosphatase 6 (617 aa).

2 disordered regions span residues 30–62 (EFQADDPSSAGIEVEHRSSFSAEKAPSTIKNTK) and 241–330 (DFDP…VLYS). The span at 242-253 (FDPSFRGSSSSH) shows a compositional bias: low complexity. The span at 254–290 (RPSDYSRRPSDYSRRPSDYSRRPSDYSRRPSDSRPSD) shows a compositional bias: basic and acidic residues. A compositionally biased stretch (low complexity) spans 291–311 (YSRPSDYYSRPSDYSRPSDFS). Catalytic regions lie at residues 458–473 (DRVIWLGDLNYRIALS) and 538–553 (KRRTPAWCDRILWFGE).

It belongs to the inositol polyphosphate 5-phosphatase family. As to expression, broadly expressed in emerging organs. Mostly localized in procambium of growing organs. Restricted to vascular differentiating cells of young organs.

It carries out the reaction a 1,2-diacyl-sn-glycero-3-phospho-(1D-myo-inositol-4,5-bisphosphate) + H2O = a 1,2-diacyl-sn-glycero-3-phospho-(1D-myo-inositol 4-phosphate) + phosphate. The enzyme catalyses a 1,2-diacyl-sn-glycero-3-phospho-(1D-myo-inositol-3,4,5-trisphosphate) + H2O = a 1,2-diacyl-sn-glycero-3-phospho-(1D-myo-inositol-3,4-bisphosphate) + phosphate. In terms of biological role, has phosphatase activity toward PtdIns(4,5)P2 and PtdIns(3,4,5)P3. Required for the patterning of procambium and during the differentiation of vascular tissues. Acts before the acquisition of preprocambial identity. Seems to be also involved in the abscisic acid (ABA) signaling pathway. Acts redundantly with CVL1 for maintaining vascular continuity. Regulates phosphoinositide-dependent VAN3 localization. The sequence is that of Type IV inositol polyphosphate 5-phosphatase 6 from Arabidopsis thaliana (Mouse-ear cress).